The sequence spans 840 residues: Subtilisin-like protease SBT2.3 (840 aa).

An N-terminal signal peptide occupies residues 1–27 (MVRVMLVRFGFLLLMISFVFLSNNTLG). The propeptide at 28-146 (QQQDDDDDSA…IVLDYSVRTA (119 aa)) is activation peptide. The region spanning 38 to 146 (VYIVTLKQPP…IVLDYSVRTA (109 aa)) is the Inhibitor I9 domain. Residues 61-81 (KSKFTPKLRPRNNSRKRHGKS) show a composition bias toward basic residues. A disordered region spans residues 61-85 (KSKFTPKLRPRNNSRKRHGKSKIPS). A glycan (N-linked (GlcNAc...) asparagine) is linked at Asn72. The Peptidase S8 domain maps to 148–694 (TYTPQFMGLP…SGFVNATAAL (547 aa)). Asp180 functions as the Charge relay system in the catalytic mechanism. N-linked (GlcNAc...) asparagine glycosylation is found at Asn193 and Asn241. His255 serves as the catalytic Charge relay system. N-linked (GlcNAc...) asparagine glycosylation is found at Asn398, Asn427, Asn480, Asn525, and Asn553. The PA domain maps to 418-513 (MISAFHALNN…MDMPGIIIPS (96 aa)). Residue Ser619 is the Charge relay system of the active site. Residues Asn689, Asn715, Asn723, Asn767, and Asn808 are each glycosylated (N-linked (GlcNAc...) asparagine).

Belongs to the peptidase S8 family.

Its subcellular location is the secreted. The protein is Subtilisin-like protease SBT2.3 of Arabidopsis thaliana (Mouse-ear cress).